The following is a 130-amino-acid chain: Small ribosomal subunit protein uS11 (130 aa).

A disordered region spans residues 108–130; the sequence is IEDVTPIPHDGTGRPGGKRGRRV.

It belongs to the universal ribosomal protein uS11 family. Part of the 30S ribosomal subunit.

Located on the platform of the 30S subunit. The polypeptide is Small ribosomal subunit protein uS11 (Methanothermobacter thermautotrophicus (strain ATCC 29096 / DSM 1053 / JCM 10044 / NBRC 100330 / Delta H) (Methanobacterium thermoautotrophicum)).